The primary structure comprises 1182 residues: Phosphatidylinositol 3-kinase age-1 (1182 aa).

Residues 1–16 show a composition bias toward polar residues; that stretch reads MSMGRSPSTTFRSRTG. Residues 1 to 24 form a disordered region; it reads MSMGRSPSTTFRSRTGSHGARDLI. The PI3K-ABD domain maps to 74–174; that stretch reads NEGVADIITM…FPMLFLYQPD (101 aa). The PI3K-RBD domain maps to 266 to 358; that stretch reads KRKAEINGVC…YRCPGFVVRR (93 aa). The C2 PI3K-type domain maps to 425–577; that stretch reads LDANLMIRPV…SSYGGRVRMP (153 aa). A PIK helical domain is found at 601–788; it reads DDYESCIRDP…SLLMEAYLRG (188 aa). The region spanning 853 to 1168 is the PI3K/PI4K catalytic domain; sequence IIDKAIVLGS…IYEEAFNGSW (316 aa). Residues 859–865 are G-loop; the sequence is VLGSAKR. A catalytic loop region spans residues 1028-1036; it reads GIKDRHSDN. The tract at residues 1047-1073 is activation loop; the sequence is HIDFGHILGHGKTKLGIQRDRQPFILT.

It belongs to the PI3/PI4-kinase family.

The enzyme catalyses a 1,2-diacyl-sn-glycero-3-phospho-(1D-myo-inositol) + ATP = a 1,2-diacyl-sn-glycero-3-phospho-(1D-myo-inositol-3-phosphate) + ADP + H(+). Functionally, phosphatidylinositol 3-kinase homolog that regulates longevity and diapause. Promotes cell survival during embryonic development by recruiting akt-1/2 to the plasma membrane through the production of PtdIns(3,4,5)P3. Could function in the development or neuroendocrine signaling of the dauer pathway. Mediates susceptibility to enteropathogenic E.coli infection. May negatively regulate AYI interneuron neurite outgrowth. Plays a role in aversive olfactory learning when an odor is associated with food deprivation. Regulates this process by promoting the nuclear relocalization of egl-4 in AWC olfactory neurons after odor conditioning. The chain is Phosphatidylinositol 3-kinase age-1 from Caenorhabditis elegans.